Reading from the N-terminus, the 130-residue chain is Ribosome-binding factor A (130 aa).

Positions 111–130 are disordered; it reads RDLDDVGPEATSSDEDAEQR.

Belongs to the RbfA family. Monomer. Binds 30S ribosomal subunits, but not 50S ribosomal subunits or 70S ribosomes.

The protein resides in the cytoplasm. Functionally, one of several proteins that assist in the late maturation steps of the functional core of the 30S ribosomal subunit. Associates with free 30S ribosomal subunits (but not with 30S subunits that are part of 70S ribosomes or polysomes). Required for efficient processing of 16S rRNA. May interact with the 5'-terminal helix region of 16S rRNA. The protein is Ribosome-binding factor A of Xanthomonas axonopodis pv. citri (strain 306).